A 558-amino-acid chain; its full sequence is Poly(A) polymerase PAPalpha (558 aa).

A compositionally biased stretch (polar residues) spans 1 to 17 (MNTKTYGVTEPISTNGP). Positions 1–20 (MNTKTYGVTEPISTNGPTPK) are disordered. ATP contacts are provided by residues 86-88 (FGS), 99-101 (DID), Asp-153, Lys-214, Tyr-223, and 232-233 (GV). Residues Asp-99, Asp-101, and Asp-153 each coordinate Mg(2+). A disordered region spans residues 516–558 (VYEDGEERPKKSGKKRKKVIKEDGQKRVRNESPASSASVNGSS). Basic and acidic residues predominate over residues 535–545 (IKEDGQKRVRN). Low complexity predominate over residues 547 to 558 (SPASSASVNGSS).

This sequence belongs to the poly(A) polymerase family. It depends on Mg(2+) as a cofactor. The cofactor is Mn(2+).

It localises to the nucleus. It carries out the reaction RNA(n) + ATP = RNA(n)-3'-adenine ribonucleotide + diphosphate. Functionally, polymerase that creates the 3'-poly(A) tail of mRNA's. May acquire specificity through interaction with a cleavage and polyadenylation factor. In Candida albicans (strain SC5314 / ATCC MYA-2876) (Yeast), this protein is Poly(A) polymerase PAPalpha (PAPALPHA).